A 114-amino-acid polypeptide reads, in one-letter code: UPF0102 protein HPG27_782 (114 aa).

The protein belongs to the UPF0102 family.

The chain is UPF0102 protein HPG27_782 from Helicobacter pylori (strain G27).